Consider the following 477-residue polypeptide: Methionine aminopeptidase 2 (477 aa).

A disordered region spans residues M1–D121. Residue A2 is modified to N-acetylalanine. Residues K36–K46 show a composition bias toward basic residues. Position 45 is a phosphoserine (S45). Residues E54–K78 show a composition bias toward basic and acidic residues. S62 carries the post-translational modification Phosphoserine; alternate. S62 is a glycosylation site (O-linked (GlcNAc) serine; alternate). Residues E79–G91 are compositionally biased toward acidic residues. Residues G96 to P108 are compositionally biased toward basic residues. H230 is a binding site for substrate. Positions 250, 261, and 330 each coordinate a divalent metal cation. A substrate-binding site is contributed by H338. A divalent metal cation is bound by residues E363 and E458.

This sequence belongs to the peptidase M24A family. Methionine aminopeptidase eukaryotic type 2 subfamily. In terms of assembly, binds EIF2S1 at low magnesium concentrations. Interacts strongly with the eIF-2 gamma-subunit EIF2S3. It depends on Co(2+) as a cofactor. The cofactor is Zn(2+). Mn(2+) is required as a cofactor. Fe(2+) serves as cofactor. Post-translationally, contains approximately 12 O-linked N-acetylglucosamine (GlcNAc) residues. O-glycosylation is required for EIF2S1 binding.

The protein resides in the cytoplasm. The catalysed reaction is Release of N-terminal amino acids, preferentially methionine, from peptides and arylamides.. In terms of biological role, cotranslationally removes the N-terminal methionine from nascent proteins. The N-terminal methionine is often cleaved when the second residue in the primary sequence is small and uncharged (Met-Ala-, Cys, Gly, Pro, Ser, Thr, or Val). Its function is as follows. Protects eukaryotic initiation factor EIF2S1 from translation-inhibiting phosphorylation by inhibitory kinases such as EIF2AK2/PKR and EIF2AK1/HCR. Plays a critical role in the regulation of protein synthesis. This is Methionine aminopeptidase 2 from Bos taurus (Bovine).